A 178-amino-acid chain; its full sequence is Large ribosomal subunit protein uL10 (178 aa).

It belongs to the universal ribosomal protein uL10 family. Part of the ribosomal stalk of the 50S ribosomal subunit. The N-terminus interacts with L11 and the large rRNA to form the base of the stalk. The C-terminus forms an elongated spine to which L12 dimers bind in a sequential fashion forming a multimeric L10(L12)X complex.

Its function is as follows. Forms part of the ribosomal stalk, playing a central role in the interaction of the ribosome with GTP-bound translation factors. In Albidiferax ferrireducens (strain ATCC BAA-621 / DSM 15236 / T118) (Rhodoferax ferrireducens), this protein is Large ribosomal subunit protein uL10.